The sequence spans 337 residues: MERAPALAEPEPRVQSLPMVKALNAGLRQALVADPKVLILGEDVGPLGGVFRVTEGLQSEFGASRVVDTPLAEAGIVGTAIGLAMRGYRPVVEIQFNGFVFPGFDQITTQLAKMANRHSGAVSMPVVIRIPHGGHIGAVEHHQEAPEAYFAHTAGLRIVAPSTPHDAYWMIQEAIASDDPVIFFEPMSRYWPKGEVDTLENPLPLHASRIVRSGTDATIVAWAGMVPVALRAAEIAAEEGRSLEVVDLRSLAPIDYAPVLRSVQKTGRLVVAQEAPGIVSVGSEVAAVVGEKAFYSLEAPVLRVAGFDTPFPPAKLESLYLPDADRILEVVDRSLAY.

E73 contributes to the thiamine diphosphate binding site.

In terms of assembly, heterodimer of an alpha and a beta chain. Thiamine diphosphate serves as cofactor.

It catalyses the reaction N(6)-[(R)-lipoyl]-L-lysyl-[protein] + pyruvate + H(+) = N(6)-[(R)-S(8)-acetyldihydrolipoyl]-L-lysyl-[protein] + CO2. Its function is as follows. The pyruvate dehydrogenase complex catalyzes the overall conversion of pyruvate to acetyl-CoA and CO(2). It contains multiple copies of three enzymatic components: pyruvate dehydrogenase (E1), dihydrolipoamide acetyltransferase (E2) and lipoamide dehydrogenase (E3). The sequence is that of Pyruvate dehydrogenase E1 component subunit beta (pdhB) from Leifsonia xyli subsp. xyli (strain CTCB07).